The primary structure comprises 1152 residues: ATP-dependent helicase/deoxyribonuclease subunit B (1152 aa).

The UvrD-like helicase ATP-binding domain maps to 1-338 (MSIRFIYGRA…LVRDRNYRFR (338 aa)). 8–15 (GRAGSGKS) lines the ATP pocket. In terms of domain architecture, UvrD-like helicase C-terminal spans 276–579 (PYRFKNSEEL…NVGDIARIKG (304 aa)). Cys785, Cys1106, Cys1109, and Cys1115 together coordinate [4Fe-4S] cluster.

The protein belongs to the helicase family. AddB/RexB type 1 subfamily. As to quaternary structure, heterodimer of AddA and AddB. Requires Mg(2+) as cofactor. The cofactor is [4Fe-4S] cluster.

The heterodimer acts as both an ATP-dependent DNA helicase and an ATP-dependent, dual-direction single-stranded exonuclease. Recognizes the chi site generating a DNA molecule suitable for the initiation of homologous recombination. The AddB subunit has 5' -&gt; 3' nuclease activity but not helicase activity. This Clostridium botulinum (strain Alaska E43 / Type E3) protein is ATP-dependent helicase/deoxyribonuclease subunit B.